The chain runs to 540 residues: Phosphoenolpyruvate carboxykinase (ATP) (540 aa).

A substrate-binding site is contributed by arginine 65. Lysine 87 carries the N6-acetyllysine modification. Substrate-binding residues include tyrosine 207 and lysine 213. ATP is bound by residues lysine 213, histidine 232, and glycine 248–threonine 256. Lysine 213 and histidine 232 together coordinate Mn(2+). Residue aspartate 269 participates in Mn(2+) binding. ATP is bound by residues glutamate 297, arginine 333, arginine 449 to isoleucine 450, and threonine 455. Position 333 (arginine 333) interacts with substrate. Residue lysine 523 is modified to N6-acetyllysine.

Belongs to the phosphoenolpyruvate carboxykinase (ATP) family. As to quaternary structure, monomer. The cofactor is Mn(2+).

It localises to the cytoplasm. The enzyme catalyses oxaloacetate + ATP = phosphoenolpyruvate + ADP + CO2. Its pathway is carbohydrate biosynthesis; gluconeogenesis. Functionally, involved in the gluconeogenesis. Catalyzes the conversion of oxaloacetate (OAA) to phosphoenolpyruvate (PEP) through direct phosphoryl transfer between the nucleoside triphosphate and OAA. The chain is Phosphoenolpyruvate carboxykinase (ATP) from Escherichia coli O6:H1 (strain CFT073 / ATCC 700928 / UPEC).